Consider the following 243-residue polypeptide: Glucosamine-6-phosphate deaminase (243 aa).

Residue aspartate 67 is the Proton acceptor; for enolization step of the active site. Asparagine 137 acts as the For ring-opening step in catalysis. The active-site Proton acceptor; for ring-opening step is the histidine 139. The For ring-opening step role is filled by glutamate 144.

The protein belongs to the glucosamine/galactosamine-6-phosphate isomerase family. NagB subfamily.

The enzyme catalyses alpha-D-glucosamine 6-phosphate + H2O = beta-D-fructose 6-phosphate + NH4(+). The protein operates within amino-sugar metabolism; N-acetylneuraminate degradation; D-fructose 6-phosphate from N-acetylneuraminate: step 5/5. Catalyzes the reversible isomerization-deamination of glucosamine 6-phosphate (GlcN6P) to form fructose 6-phosphate (Fru6P) and ammonium ion. The polypeptide is Glucosamine-6-phosphate deaminase (Staphylococcus epidermidis (strain ATCC 35984 / DSM 28319 / BCRC 17069 / CCUG 31568 / BM 3577 / RP62A)).